A 734-amino-acid chain; its full sequence is Vacuolar transporter chaperone complex subunit 2 (734 aa).

One can recognise an SPX domain in the interval 1-144; that stretch reads MRFSDSIEAG…PGYSLRPVFQ (144 aa). Topologically, residues 1-624 are cytoplasmic; it reads MRFSDSIEAG…EAKVWLANER (624 aa). Residues 125-132 form an important for inositol polyphosphate binding region; that stretch reads KIVKKHDK. S181 bears the Phosphoserine mark. Phosphothreonine is present on T529. A Phosphotyrosine modification is found at Y583. A helical membrane pass occupies residues 625 to 645; sequence TFLKWLHVVVLLGSLALALYN. Over 646 to 650 the chain is Vacuolar; sequence SAGER. Residues 651–671 traverse the membrane as a helical segment; sequence LGQAFGVVYTLLAIFIGFYAW. The Cytoplasmic segment spans residues 672 to 693; the sequence is KLHAKRSQMIKSRSPAPMTDYW. The chain crosses the membrane as a helical span at residues 694–714; that stretch reads GPLIVGTALAISLIVNMSFAL. Topologically, residues 715–734 are vacuolar; it reads KDAVYQNLIEPDRLLVKLFT.

The protein belongs to the VTC2/3 family. As to quaternary structure, the VTC core complex is an integral membrane heterooligomer composed of at least the catalytic subunit vtc4 and the accessory subunits vtc1 and vtc2. vtc1 is a small membrane protein without hydrophilic domain. Vtc2 and vtc4 are related and have 2 hydrophilic domains that face the cytosol, an N-terminal SPX domain and the central core domain. The central core in vtc4 is the catalytic domain.

It localises to the vacuole membrane. Functionally, accessory subunit of the vacuolar transporter chaperone (VTC) complex. The VTC complex acts as a vacuolar polyphosphate polymerase that catalyzes the synthesis of inorganic polyphosphate (polyP) via transfer of phosphate from ATP to a growing polyP chain, releasing ADP. VTC exposes its catalytic domain vtc4 to the cytosol, where the growing polyP chain winds through a tunnel-shaped pocket, integrating cytoplasmic polymer synthesis with polyP membrane translocation. The VTC complex carries 9 vacuolar transmembrane domains, which are likely to constitute the translocation channel into the organelle lumen. PolyP synthesis is tightly coupled to its transport into the vacuole lumen, in order to avoid otherwise toxic intermediates in the cytosol, and it depends on the proton gradient across the membrane, formed by V-ATPase. The VTC complex also plays a role in vacuolar membrane fusion. In Schizosaccharomyces pombe (strain 972 / ATCC 24843) (Fission yeast), this protein is Vacuolar transporter chaperone complex subunit 2 (vtc2).